The sequence spans 224 residues: 7-cyano-7-deazaguanine synthase (224 aa).

An ATP-binding site is contributed by 14–24 (FSGGQDSTTCL). Positions 190, 198, 201, and 204 each coordinate Zn(2+).

This sequence belongs to the QueC family. The cofactor is Zn(2+).

It catalyses the reaction 7-carboxy-7-deazaguanine + NH4(+) + ATP = 7-cyano-7-deazaguanine + ADP + phosphate + H2O + H(+). The protein operates within purine metabolism; 7-cyano-7-deazaguanine biosynthesis. Functionally, catalyzes the ATP-dependent conversion of 7-carboxy-7-deazaguanine (CDG) to 7-cyano-7-deazaguanine (preQ(0)). The chain is 7-cyano-7-deazaguanine synthase from Haemophilus ducreyi (strain 35000HP / ATCC 700724).